The chain runs to 54 residues: UPF0391 membrane protein Rfer_1875 (54 aa).

Helical transmembrane passes span 5–25 and 30–50; these read AVVF…GIAA and IGKI…LFGL.

This sequence belongs to the UPF0391 family.

The protein localises to the cell membrane. This Albidiferax ferrireducens (strain ATCC BAA-621 / DSM 15236 / T118) (Rhodoferax ferrireducens) protein is UPF0391 membrane protein Rfer_1875.